Reading from the N-terminus, the 809-residue chain is Leucine--tRNA ligase (809 aa).

A 'HIGH' region motif is present at residues 40–50 (PYPSGRIHMGH). A 'KMSKS' region motif is present at residues 579–583 (KMSKS). Position 582 (K582) interacts with ATP.

It belongs to the class-I aminoacyl-tRNA synthetase family.

Its subcellular location is the cytoplasm. It catalyses the reaction tRNA(Leu) + L-leucine + ATP = L-leucyl-tRNA(Leu) + AMP + diphosphate. This chain is Leucine--tRNA ligase, found in Campylobacter lari (strain RM2100 / D67 / ATCC BAA-1060).